Consider the following 436-residue polypeptide: GTPase Der (436 aa).

EngA-type G domains are found at residues 4-167 (PVIA…PKIE) and 176-351 (IRFS…ESHS). GTP-binding positions include 10-17 (GRPNVGKS), 57-61 (DTGGI), 119-122 (NKVD), 182-189 (GRPNVGKS), 229-233 (DTAGM), and 294-297 (NKWD). Residues 352-436 (IRIQTNVLND…PIHIIARARD (85 aa)) enclose the KH-like domain.

This sequence belongs to the TRAFAC class TrmE-Era-EngA-EngB-Septin-like GTPase superfamily. EngA (Der) GTPase family. Associates with the 50S ribosomal subunit.

Its function is as follows. GTPase that plays an essential role in the late steps of ribosome biogenesis. This Bacillus cereus (strain ATCC 10987 / NRS 248) protein is GTPase Der.